Reading from the N-terminus, the 739-residue chain is MAVKVDKDPVPTSFEKWGKPGHFDRTLARGPKTTTWIWNLHADAHDFDSQTSDLEDISRKIFSAHFGHLAVVFVWLSGMYFHGAKFSNYEAWLNNPTVIKPSAQVVWPVVGQGILNGDVGGGFSGIQITSGLFYLWRAAGFTNSYQLYVTAIGGLVMAALMVFAGWFHYHKAAPKLEWFQNAEAMMNHHLSVLLGCGSLGWTGHLIHVSLPVNKLLDSGVAAKDIPLPHEFFDASVMAELYPSFAQGLKPFFTLDWAAYSDFLTFKGGLNPTTGSLWLSDVAHHHLAIAVLFIIAGHMYRTGFGIGHSMKEILEAHKGPFTGEGHKGLYEILTTSWHAQLAVNLALLGSLTIVIAHHMYSMPPYPYMATDYGTQLSLFTHHTWIGGFLIVGAGAHGAIFMVRDYDPAKNVNNLLDRVIRHRDAIISHLNWVCIFLGFHSFGLYIHNDTMRALGRPQDMFSDSAIQLQPIFAQWIQNIHTLAPGGTAPNAIASASQVFGGDVVAIGNKVALMPITLGTADFMVHHIHAFTIHVTVLILLKGLLYSRSSRLVPDKGQLGFRFPCDGPGRGGTCQVSGWDHVFLGLFWMYNSLSIVIFHFSWKMQSDVWGTILPDGSVSHVTGGNFATSAITINGWLRDFLWAQSSQVINSYGSALSAYGIMFLAGHFVFAFSLMFLFSGRGYWQELIESIVWAHNKLKLAPAIQPRALSIVQGRAVGVAHYLLGGIVTTWAFFLARSLSIG.

Transmembrane regions (helical) follow at residues 61–84 (IFSA…FHGA), 147–170 (LYVT…FHYH), 186–210 (MNHH…HVSL), 281–299 (VAHH…GHMY), 336–359 (WHAQ…HHMY), 375–401 (LSLF…IFMV), 423–445 (AIIS…LYIH), and 520–538 (FMVH…LILL). The [4Fe-4S] cluster site is built by Cys562 and Cys571. Helical transmembrane passes span 578 to 599 (HVFL…HFSW) and 653 to 675 (LSAY…MFLF). His664 serves as a coordination point for chlorophyll a'. Residues Met672 and Tyr680 each coordinate chlorophyll a. A phylloquinone-binding site is contributed by Trp681. Residues 713 to 733 (AVGVAHYLLGGIVTTWAFFLA) traverse the membrane as a helical segment.

This sequence belongs to the PsaA/PsaB family. In terms of assembly, the PsaA/B heterodimer binds the P700 chlorophyll special pair and subsequent electron acceptors. PSI consists of a core antenna complex that captures photons, and an electron transfer chain that converts photonic excitation into a charge separation. The cyanobacterial PSI reaction center is composed of one copy each of PsaA,B,C,D,E,F,I,J,K,L,M and X, and forms trimeric complexes. PSI electron transfer chain: 5 chlorophyll a, 1 chlorophyll a', 2 phylloquinones and 3 4Fe-4S clusters. PSI core antenna: 90 chlorophyll a, 22 carotenoids, 3 phospholipids and 1 galactolipid. P700 is a chlorophyll a/chlorophyll a' dimer, A0 is one or more chlorophyll a, A1 is one or both phylloquinones and FX is a shared 4Fe-4S iron-sulfur center. serves as cofactor.

The protein localises to the cellular thylakoid membrane. The enzyme catalyses reduced [plastocyanin] + hnu + oxidized [2Fe-2S]-[ferredoxin] = oxidized [plastocyanin] + reduced [2Fe-2S]-[ferredoxin]. PsaA and PsaB bind P700, the primary electron donor of photosystem I (PSI), as well as the electron acceptors A0, A1 and FX. PSI is a plastocyanin/cytochrome c6-ferredoxin oxidoreductase, converting photonic excitation into a charge separation, which transfers an electron from the donor P700 chlorophyll pair to the spectroscopically characterized acceptors A0, A1, FX, FA and FB in turn. Oxidized P700 is reduced on the lumenal side of the thylakoid membrane by plastocyanin or cytochrome c6. The polypeptide is Photosystem I P700 chlorophyll a apoprotein A1 (Picosynechococcus sp. (strain ATCC 27264 / PCC 7002 / PR-6) (Agmenellum quadruplicatum)).